Here is a 221-residue protein sequence, read N- to C-terminus: Thiamine-phosphate synthase (221 aa).

Residues 39–43 and N76 contribute to the 4-amino-2-methyl-5-(diphosphooxymethyl)pyrimidine site; that span reads QLRCK. Positions 77 and 96 each coordinate Mg(2+). A 4-amino-2-methyl-5-(diphosphooxymethyl)pyrimidine-binding site is contributed by S114. 140–142 contacts 2-[(2R,5Z)-2-carboxy-4-methylthiazol-5(2H)-ylidene]ethyl phosphate; it reads TPT. Residue K143 coordinates 4-amino-2-methyl-5-(diphosphooxymethyl)pyrimidine. G171 provides a ligand contact to 2-[(2R,5Z)-2-carboxy-4-methylthiazol-5(2H)-ylidene]ethyl phosphate.

It belongs to the thiamine-phosphate synthase family. Mg(2+) is required as a cofactor.

The enzyme catalyses 2-[(2R,5Z)-2-carboxy-4-methylthiazol-5(2H)-ylidene]ethyl phosphate + 4-amino-2-methyl-5-(diphosphooxymethyl)pyrimidine + 2 H(+) = thiamine phosphate + CO2 + diphosphate. The catalysed reaction is 2-(2-carboxy-4-methylthiazol-5-yl)ethyl phosphate + 4-amino-2-methyl-5-(diphosphooxymethyl)pyrimidine + 2 H(+) = thiamine phosphate + CO2 + diphosphate. It catalyses the reaction 4-methyl-5-(2-phosphooxyethyl)-thiazole + 4-amino-2-methyl-5-(diphosphooxymethyl)pyrimidine + H(+) = thiamine phosphate + diphosphate. The protein operates within cofactor biosynthesis; thiamine diphosphate biosynthesis; thiamine phosphate from 4-amino-2-methyl-5-diphosphomethylpyrimidine and 4-methyl-5-(2-phosphoethyl)-thiazole: step 1/1. Condenses 4-methyl-5-(beta-hydroxyethyl)thiazole monophosphate (THZ-P) and 2-methyl-4-amino-5-hydroxymethyl pyrimidine pyrophosphate (HMP-PP) to form thiamine monophosphate (TMP). The sequence is that of Thiamine-phosphate synthase from Deinococcus geothermalis (strain DSM 11300 / CIP 105573 / AG-3a).